The chain runs to 567 residues: MSHISRQAYADMFGPTVGDRVRLADTALWVEVEKDFTIYGEEVKFGGGKVIRDGMGQGQMLAAEAMDLVLTNALIIDHWGIVKADIGIKHGRIAVIGKAGNPDVQPGVNVPVGPGTEVIAAEGKIVTAGGVDSHIHFICPQQVDEALNSGVTTFIGGGTGPATGTNATTCTPGPWYLARMLQAADSLPINIGLLGKGNASRPDALREQIAAGAVGLKLHEDWGSTPAAIDCCLGVAEEMDIQVAIHTDTLNESGCIEDTLAAIGDRTIHTFHTEGAGGGHAPDIIRAAGQANVLPSSTNPTLPYTINTVDEHLDMLMVCHHLDPSIAEDVAFAESRIRRETIAAEDILHDMGAFAMTSSDSQAMGRVGEVVLRTWQVAHQMKLRRGPLAPDTPYSDNFRVKRYIAKYTINPALTHGIGHEVGSVEVGKLADLVLWSPAFFAVKPALVLKGGMIVTAPMGDINGSIPTPQPVHYRPMFGALGAARHATRMTFLPQAAMDRGLAEELNLRSLIGVVNGCRRVRKPDMVHNTLQPLIEVDAQTYQVRADGELLVCEPASELPLAQRYFLF.

The region spanning 129–567 (GGVDSHIHFI…LPLAQRYFLF (439 aa)) is the Urease domain. His134, His136, and Lys217 together coordinate Ni(2+). At Lys217 the chain carries N6-carboxylysine. Substrate is bound at residue His219. 2 residues coordinate Ni(2+): His246 and His272. Residue His320 is the Proton donor of the active site. A Ni(2+)-binding site is contributed by Asp360.

It belongs to the metallo-dependent hydrolases superfamily. Urease alpha subunit family. Heterotrimer of UreA (gamma), UreB (beta) and UreC (alpha) subunits. Three heterotrimers associate to form the active enzyme. Ni cation is required as a cofactor. Post-translationally, carboxylation allows a single lysine to coordinate two nickel ions.

The protein resides in the cytoplasm. The enzyme catalyses urea + 2 H2O + H(+) = hydrogencarbonate + 2 NH4(+). The protein operates within nitrogen metabolism; urea degradation; CO(2) and NH(3) from urea (urease route): step 1/1. This is Urease subunit alpha from Pseudomonas putida (strain ATCC 47054 / DSM 6125 / CFBP 8728 / NCIMB 11950 / KT2440).